The sequence spans 214 residues: Pyridoxine/pyridoxamine 5'-phosphate oxidase (214 aa).

Residues 10 to 13 (RLNY) and K68 each bind substrate. Residues 63 to 68 (RMVLLK), 78 to 79 (YT), K85, and Q107 contribute to the FMN site. Substrate is bound by residues Y125, R129, and S133. FMN contacts are provided by residues 142 to 143 (QS) and W187. Position 193–195 (193–195 (RLH)) interacts with substrate. FMN is bound at residue R197.

The protein belongs to the pyridoxamine 5'-phosphate oxidase family. In terms of assembly, homodimer. It depends on FMN as a cofactor.

It catalyses the reaction pyridoxamine 5'-phosphate + O2 + H2O = pyridoxal 5'-phosphate + H2O2 + NH4(+). The catalysed reaction is pyridoxine 5'-phosphate + O2 = pyridoxal 5'-phosphate + H2O2. The protein operates within cofactor metabolism; pyridoxal 5'-phosphate salvage; pyridoxal 5'-phosphate from pyridoxamine 5'-phosphate: step 1/1. It participates in cofactor metabolism; pyridoxal 5'-phosphate salvage; pyridoxal 5'-phosphate from pyridoxine 5'-phosphate: step 1/1. Its function is as follows. Catalyzes the oxidation of either pyridoxine 5'-phosphate (PNP) or pyridoxamine 5'-phosphate (PMP) into pyridoxal 5'-phosphate (PLP). The chain is Pyridoxine/pyridoxamine 5'-phosphate oxidase from Synechocystis sp. (strain ATCC 27184 / PCC 6803 / Kazusa).